The following is a 919-amino-acid chain: Protein phosphatase 1 regulatory subunit 37 (919 aa).

LRR repeat units follow at residues 340–361 (SLQY…FVAR), 368–388 (SLTV…MLLA), 396–417 (NLRE…AQLG), 425–445 (NIQI…AYVC), 454–474 (GLVT…GYLA), and 482–502 (SLET…HKLK). Disordered regions lie at residues 626 to 716 (ATED…TIPS) and 790 to 866 (APSQ…APLP). A compositionally biased stretch (acidic residues) spans 631–640 (THEEEEEEEA). The span at 641–658 (SPLKKIEEETTDALKDAT) shows a compositional bias: basic and acidic residues. A compositionally biased stretch (acidic residues) spans 677–690 (PQDDSDSDTEDEET). Positions 691–701 (PTNTSLTSTSP) are enriched in low complexity. 2 stretches are compositionally biased toward polar residues: residues 791-801 (PSQTQNSTQPT) and 811-837 (DAQQ…LTES). The stretch at 833–861 (QLTESVSEEEQKKAETLNNEADINEDANT) forms a coiled coil.

The protein belongs to the PPP1R37 family.

May inhibit phosphatase activity of protein phosphatase 1 (PP1) complexes. This Danio rerio (Zebrafish) protein is Protein phosphatase 1 regulatory subunit 37 (ppp1r37).